We begin with the raw amino-acid sequence, 195 residues long: UPF0314 protein RHE_CH03951 (195 aa).

4 consecutive transmembrane segments (helical) span residues Ala14 to Met34, Trp64 to Leu84, Asp128 to Ala148, and Ala150 to Ile170.

Belongs to the UPF0314 family.

It localises to the cell membrane. The polypeptide is UPF0314 protein RHE_CH03951 (Rhizobium etli (strain ATCC 51251 / DSM 11541 / JCM 21823 / NBRC 15573 / CFN 42)).